A 272-amino-acid polypeptide reads, in one-letter code: Eukaryotic translation initiation factor 4E homolog (272 aa).

Positions 249 to 272 are disordered; it reads GKLNSGRKPSNTRGGFSSFGNKRY. The segment covering 255–272 has biased composition (polar residues); that stretch reads RKPSNTRGGFSSFGNKRY.

It belongs to the eukaryotic initiation factor 4E family.

In terms of biological role, recognizes and binds the 7-methylguanosine-containing mRNA cap during an early step in the initiation of protein synthesis and facilitates ribosome binding by inducing the unwinding of the mRNAs secondary structures. In Acanthamoeba polyphaga mimivirus (APMV), this protein is Eukaryotic translation initiation factor 4E homolog.